The following is a 351-amino-acid chain: Photosystem II D2 protein (351 aa).

A helical transmembrane segment spans residues 39-59 (CAYLALGAWFTGTTFVSSWYT). Position 116 (His116) interacts with chlorophyll a. The chain crosses the membrane as a helical span at residues 123–139 (GFCLRQFEIARLVGLRP). Pheophytin a contacts are provided by Gln128 and Asn141. A helical membrane pass occupies residues 151–164 (VFVSVFLLYPLGQA). His196 contacts chlorophyll a. Residues 206–226 (GALLCAIHGATVENTLFEDGE) form a helical membrane-spanning segment. The a plastoquinone site is built by His213 and Phe260. A Fe cation-binding site is contributed by His213. His267 is a binding site for Fe cation. The chain crosses the membrane as a helical span at residues 277–293 (GLWVSSIGIVGLALNLR).

This sequence belongs to the reaction center PufL/M/PsbA/D family. PSII is composed of 1 copy each of membrane proteins PsbA, PsbB, PsbC, PsbD, PsbE, PsbF, PsbH, PsbI, PsbJ, PsbK, PsbL, PsbM, PsbT, PsbY, PsbZ, Psb30/Ycf12, at least 3 peripheral proteins of the oxygen-evolving complex and a large number of cofactors. It forms dimeric complexes. Requires The D1/D2 heterodimer binds P680, chlorophylls that are the primary electron donor of PSII, and subsequent electron acceptors. It shares a non-heme iron and each subunit binds pheophytin, quinone, additional chlorophylls, carotenoids and lipids. There is also a Cl(-1) ion associated with D1 and D2, which is required for oxygen evolution. The PSII complex binds additional chlorophylls, carotenoids and specific lipids. as cofactor.

The protein resides in the plastid. The protein localises to the chloroplast thylakoid membrane. The enzyme catalyses 2 a plastoquinone + 4 hnu + 2 H2O = 2 a plastoquinol + O2. Functionally, photosystem II (PSII) is a light-driven water:plastoquinone oxidoreductase that uses light energy to abstract electrons from H(2)O, generating O(2) and a proton gradient subsequently used for ATP formation. It consists of a core antenna complex that captures photons, and an electron transfer chain that converts photonic excitation into a charge separation. The D1/D2 (PsbA/PsbD) reaction center heterodimer binds P680, the primary electron donor of PSII as well as several subsequent electron acceptors. D2 is needed for assembly of a stable PSII complex. The polypeptide is Photosystem II D2 protein (Cyanidium caldarium (Red alga)).